The primary structure comprises 84 residues: MKVMFMLALLFSSLVATSAFRLPFQFFGANEDFNSGLTKRNYYESKPYKREFNADDLTLRFGKRGGAGEPLAFSPDMLSLRFGK.

Residues 1–19 form the signal peptide; the sequence is MKVMFMLALLFSSLVATSA. Residues 20–48 constitute a propeptide that is removed on maturation; sequence FRLPFQFFGANEDFNSGLTKRNYYESKPY. Phenylalanine amide occurs at positions 61 and 82.

It belongs to the FARP (FMRFamide related peptide) family. In terms of tissue distribution, each flp gene is expressed in a distinct set of neurons.

Its subcellular location is the secreted. Its function is as follows. FMRFamides and FMRFamide-like peptides are neuropeptides. The protein is FMRFamide-like neuropeptides 26 of Caenorhabditis elegans.